We begin with the raw amino-acid sequence, 282 residues long: Phosphatidylglycerol--prolipoprotein diacylglyceryl transferase (282 aa).

4 helical membrane-spanning segments follow: residues I23–W43, F71–Y91, I106–I126, and G132–F152. An a 1,2-diacyl-sn-glycero-3-phospho-(1'-sn-glycerol)-binding site is contributed by R154. 3 helical membrane passes run L189–G209, G217–F237, and W252–L272.

Belongs to the Lgt family.

Its subcellular location is the cell inner membrane. It catalyses the reaction L-cysteinyl-[prolipoprotein] + a 1,2-diacyl-sn-glycero-3-phospho-(1'-sn-glycerol) = an S-1,2-diacyl-sn-glyceryl-L-cysteinyl-[prolipoprotein] + sn-glycerol 1-phosphate + H(+). It functions in the pathway protein modification; lipoprotein biosynthesis (diacylglyceryl transfer). In terms of biological role, catalyzes the transfer of the diacylglyceryl group from phosphatidylglycerol to the sulfhydryl group of the N-terminal cysteine of a prolipoprotein, the first step in the formation of mature lipoproteins. The chain is Phosphatidylglycerol--prolipoprotein diacylglyceryl transferase from Rhizobium leguminosarum bv. trifolii (strain WSM2304).